Here is a 391-residue protein sequence, read N- to C-terminus: Putative F-box protein At1g47730 (391 aa).

A compositionally biased stretch (basic and acidic residues) spans 1–12 (MEQREEKTENIQ). Residues 1–25 (MEQREEKTENIQRKRSRGKSSSSSL) form a disordered region. The 50-residue stretch at 19-68 (KSSSSSLPLDLTSEIFSRLPAKSVVRFRCVSKLWSSITTAPYFTNSFETR) folds into the F-box domain.

The chain is Putative F-box protein At1g47730 from Arabidopsis thaliana (Mouse-ear cress).